A 182-amino-acid polypeptide reads, in one-letter code: Ribosome-recycling factor (182 aa).

Belongs to the RRF family.

It localises to the cytoplasm. Its function is as follows. Responsible for the release of ribosomes from messenger RNA at the termination of protein biosynthesis. May increase the efficiency of translation by recycling ribosomes from one round of translation to another. The protein is Ribosome-recycling factor of Prochlorococcus marinus (strain AS9601).